We begin with the raw amino-acid sequence, 860 residues long: MSAIESAIKPQHTPMMQQYLGIKAKHPHQLVFYRMGDFYELFYEDARRAAELLDITLTQRGQSGGQPIPMAGVPFHAAEGYIGRLVRLGESVVICEQVGDPAASKGPVERKVVRVVTPGTLSDEAFLEEKSDNLLLAISAYKDLFGLATLDIAGGRFLIQEVRGVEALASELQRLRPAEILVSEQFPFLTLLENYTGVQKQPPWYFEQETAQRLLCQQFRTKDLAGFDCEGMSAAIEAAGCLFQYAQETQRSQLPHIRTMIRERREDSIILDAASRRNLEIDVNLAGDYRHTLAWVMDKSATAMGSRMLRRWLNRPLRSQEEVRQRQNAIKELLEDYQFEALHETLKQIGDSERILSRVALRSARPRDLARLRDTLTLLPDLQKQMEELNDTHLRRLAKQVSEFPDIADLLSRAIEENPPVVIRDGGVLRQGFDEELDELRSISENAGDYLLEIEKREKERTQLSSLKVGYNRVHGYFIELSRTQSDQAPADYIRRQTLKNAERFITPELKTFEDKALSAKSRALSREKMLYDQILETIVEQLAPLQDSARALSELDVLSNFAERALTLNLVCPDLTDEHMLHIEGGRHPVVEQVSQDPFVPNDLNLQDKHRMLIITGPNMGGKSTYMRQTACIVILAYCGSFVPAAKVVIGPIDRVFTRMGSSDDIAGGRSTFMVEMTETANILHYATRQSLVLMDEVGRGTSTFDGLSLAWACAEHLAREIQAFTLFATHYFELTALPKTHANVANVHLTATEHNDSIVFLHTVHEGPASKSYGIQVAQLAGVPPQVINQAQKQLKQLESGASKPALTAPAPSLQDDLFARVEPSEVETRLQKLDVDSLSPREALNMLYELKTMSENS.

618-625 (GPNMGGKS) is a binding site for ATP.

The protein belongs to the DNA mismatch repair MutS family.

Its function is as follows. This protein is involved in the repair of mismatches in DNA. It is possible that it carries out the mismatch recognition step. This protein has a weak ATPase activity. The protein is DNA mismatch repair protein MutS of Hahella chejuensis (strain KCTC 2396).